We begin with the raw amino-acid sequence, 44 residues long: Photosystem I reaction center subunit IX 2 (44 aa).

The helical transmembrane segment at 13–35 (APVLATLWLSSTAVILIGVNSYF) threads the bilayer.

It belongs to the PsaJ family.

It is found in the cellular thylakoid membrane. Functionally, may help in the organization of the PsaE and PsaF subunits. The chain is Photosystem I reaction center subunit IX 2 (psaJ2) from Prochlorococcus marinus (strain NATL2A).